A 205-amino-acid chain; its full sequence is Holliday junction branch migration complex subunit RuvA (205 aa).

The segment at 1 to 67 is domain I; the sequence is MITSIFGKVT…QIIEEAFAFN (67 aa). The segment at 68 to 146 is domain II; that stretch reads TLEEKEWFCR…NNKNIKGVQV (79 aa). Residues 147–150 form a flexible linker region; that stretch reads ADGY. A domain III region spans residues 150–205; the sequence is YDELFETLKSLGYKQQEIQDALKMIEVKPDFDISQLVAEVIKLMSFKNNEITNKTA.

The protein belongs to the RuvA family. In terms of assembly, homotetramer. Forms an RuvA(8)-RuvB(12)-Holliday junction (HJ) complex. HJ DNA is sandwiched between 2 RuvA tetramers; dsDNA enters through RuvA and exits via RuvB. An RuvB hexamer assembles on each DNA strand where it exits the tetramer. Each RuvB hexamer is contacted by two RuvA subunits (via domain III) on 2 adjacent RuvB subunits; this complex drives branch migration. In the full resolvosome a probable DNA-RuvA(4)-RuvB(12)-RuvC(2) complex forms which resolves the HJ.

Its subcellular location is the cytoplasm. Functionally, the RuvA-RuvB-RuvC complex processes Holliday junction (HJ) DNA during genetic recombination and DNA repair, while the RuvA-RuvB complex plays an important role in the rescue of blocked DNA replication forks via replication fork reversal (RFR). RuvA specifically binds to HJ cruciform DNA, conferring on it an open structure. The RuvB hexamer acts as an ATP-dependent pump, pulling dsDNA into and through the RuvAB complex. HJ branch migration allows RuvC to scan DNA until it finds its consensus sequence, where it cleaves and resolves the cruciform DNA. The polypeptide is Holliday junction branch migration complex subunit RuvA (Mycoplasma genitalium (strain ATCC 33530 / DSM 19775 / NCTC 10195 / G37) (Mycoplasmoides genitalium)).